A 315-amino-acid polypeptide reads, in one-letter code: tRNA-specific adenosine deaminase subunit tad3 (315 aa).

Residues 158–299 (KRIESILEDL…AELNHRYLAY (142 aa)) enclose the CMP/dCMP-type deaminase domain. Histidine 211, cysteine 253, and cysteine 256 together coordinate Zn(2+).

It belongs to the cytidine and deoxycytidylate deaminase family. ADAT3 subfamily. Heterodimer with Tad2.

It is found in the cytoplasm. It localises to the nucleus. Its function is as follows. Structural subunit of tRNA-specific adenosine deaminase, which deaminates adenosine-34 (the first, also called wobble position of the anticodon) to inosine in many tRNAs. Inosine-34 allows the decoding of 3 different nucleotides at the third position of mRNA codons, as inosine is able to pair with U, C, and A. The wobble inosine tRNA modification is essential for cell cycle progression in the G1/S and G2/M transitions in fission yeast. The protein is tRNA-specific adenosine deaminase subunit tad3 (tad3) of Schizosaccharomyces pombe (strain 972 / ATCC 24843) (Fission yeast).